A 203-amino-acid polypeptide reads, in one-letter code: Guanylate kinase (203 aa).

Residues 5-184 enclose the Guanylate kinase-like domain; sequence GMLIVLSGPS…AVQRIEKIIE (180 aa). 12-19 is an ATP binding site; that stretch reads GPSGVGKG.

This sequence belongs to the guanylate kinase family.

The protein localises to the cytoplasm. It carries out the reaction GMP + ATP = GDP + ADP. Its function is as follows. Essential for recycling GMP and indirectly, cGMP. The chain is Guanylate kinase from Latilactobacillus sakei subsp. sakei (strain 23K) (Lactobacillus sakei subsp. sakei).